A 586-amino-acid chain; its full sequence is Arginine--tRNA ligase (586 aa).

A 'HIGH' region motif is present at residues 131-141 (ANPTGPMHVGH).

The protein belongs to the class-I aminoacyl-tRNA synthetase family. In terms of assembly, monomer.

It is found in the cytoplasm. It catalyses the reaction tRNA(Arg) + L-arginine + ATP = L-arginyl-tRNA(Arg) + AMP + diphosphate. In Rhizobium rhizogenes (strain K84 / ATCC BAA-868) (Agrobacterium radiobacter), this protein is Arginine--tRNA ligase.